Here is a 482-residue protein sequence, read N- to C-terminus: UDP-N-acetylmuramoyl-L-alanyl-D-glutamate--2,6-diaminopimelate ligase (482 aa).

UDP-N-acetyl-alpha-D-muramoyl-L-alanyl-D-glutamate is bound at residue Ser-30. 111–117 contributes to the ATP binding site; it reads GTNGKTT. UDP-N-acetyl-alpha-D-muramoyl-L-alanyl-D-glutamate is bound by residues 153–154, Ser-180, Gln-186, and Arg-188; that span reads TT. The residue at position 220 (Lys-220) is an N6-carboxylysine. Meso-2,6-diaminopimelate-binding positions include Arg-378, 402 to 405, Gly-455, and Glu-459; that span reads DNPR. Residues 402–405 carry the Meso-diaminopimelate recognition motif motif; the sequence is DNPR.

Belongs to the MurCDEF family. MurE subfamily. Mg(2+) serves as cofactor. In terms of processing, carboxylation is probably crucial for Mg(2+) binding and, consequently, for the gamma-phosphate positioning of ATP.

It localises to the cytoplasm. The catalysed reaction is UDP-N-acetyl-alpha-D-muramoyl-L-alanyl-D-glutamate + meso-2,6-diaminopimelate + ATP = UDP-N-acetyl-alpha-D-muramoyl-L-alanyl-gamma-D-glutamyl-meso-2,6-diaminopimelate + ADP + phosphate + H(+). It participates in cell wall biogenesis; peptidoglycan biosynthesis. In terms of biological role, catalyzes the addition of meso-diaminopimelic acid to the nucleotide precursor UDP-N-acetylmuramoyl-L-alanyl-D-glutamate (UMAG) in the biosynthesis of bacterial cell-wall peptidoglycan. The protein is UDP-N-acetylmuramoyl-L-alanyl-D-glutamate--2,6-diaminopimelate ligase of Bacteroides thetaiotaomicron (strain ATCC 29148 / DSM 2079 / JCM 5827 / CCUG 10774 / NCTC 10582 / VPI-5482 / E50).